The following is a 457-amino-acid chain: Na(+)/H(+) antiporter NhaA (457 aa).

Helical transmembrane passes span 33–53 (ASGI…NSPL), 76–96 (FSLA…VVGM), 114–134 (LLPL…FLAF), 142–162 (AGWG…LTLL), 172–192 (VFVT…IALF), 196–216 (GLQL…ALMS), 235–255 (YALH…GLAI), 308–328 (FVHA…ALAN), 349–369 (TALA…WIAV), 385–405 (LIGV…IAGL), and 419–439 (VGIL…LRLT).

This sequence belongs to the NhaA Na(+)/H(+) (TC 2.A.33) antiporter family.

The protein resides in the cell inner membrane. It catalyses the reaction Na(+)(in) + 2 H(+)(out) = Na(+)(out) + 2 H(+)(in). Its function is as follows. Na(+)/H(+) antiporter that extrudes sodium in exchange for external protons. In Anaeromyxobacter sp. (strain Fw109-5), this protein is Na(+)/H(+) antiporter NhaA.